A 286-amino-acid polypeptide reads, in one-letter code: Polyamine aminopropyltransferase (286 aa).

One can recognise a PABS domain in the interval 9–242 (NGWIDEHHQG…GWWSWTFAAI (234 aa)). Q36 contributes to the S-methyl-5'-thioadenosine binding site. Residues H67 and D91 each contribute to the spermidine site. S-methyl-5'-thioadenosine-binding positions include E111 and 143-144 (NG). The active-site Proton acceptor is the D162. S-methyl-5'-thioadenosine is bound at residue P169.

It belongs to the spermidine/spermine synthase family. Homodimer or homotetramer.

The protein resides in the cytoplasm. The catalysed reaction is S-adenosyl 3-(methylsulfanyl)propylamine + putrescine = S-methyl-5'-thioadenosine + spermidine + H(+). It functions in the pathway amine and polyamine biosynthesis; spermidine biosynthesis; spermidine from putrescine: step 1/1. Its function is as follows. Catalyzes the irreversible transfer of a propylamine group from the amino donor S-adenosylmethioninamine (decarboxy-AdoMet) to putrescine (1,4-diaminobutane) to yield spermidine. The polypeptide is Polyamine aminopropyltransferase (Prochlorococcus marinus (strain MIT 9313)).